Here is a 397-residue protein sequence, read N- to C-terminus: Acetate kinase (397 aa).

Residue Asn-7 coordinates Mg(2+). Lys-14 is an ATP binding site. Arg-90 is a substrate binding site. Residue Asp-147 is the Proton donor/acceptor of the active site. ATP is bound by residues 207-211 (HLGNG), 282-284 (DFR), and 330-334 (GLGEN). Glu-383 is a Mg(2+) binding site.

Belongs to the acetokinase family. In terms of assembly, homodimer. The cofactor is Mg(2+). Mn(2+) is required as a cofactor.

The protein resides in the cytoplasm. The enzyme catalyses acetate + ATP = acetyl phosphate + ADP. Its pathway is metabolic intermediate biosynthesis; acetyl-CoA biosynthesis; acetyl-CoA from acetate: step 1/2. Catalyzes the formation of acetyl phosphate from acetate and ATP. Can also catalyze the reverse reaction. The polypeptide is Acetate kinase (Clostridium botulinum (strain 657 / Type Ba4)).